The primary structure comprises 146 residues: 3-dehydroquinate dehydratase (146 aa).

The Proton acceptor role is filled by tyrosine 22. Substrate is bound by residues asparagine 74, histidine 80, and aspartate 87. Histidine 100 functions as the Proton donor in the catalytic mechanism. Substrate-binding positions include 101–102 and arginine 111; that span reads LS.

It belongs to the type-II 3-dehydroquinase family. As to quaternary structure, homododecamer.

The catalysed reaction is 3-dehydroquinate = 3-dehydroshikimate + H2O. It functions in the pathway metabolic intermediate biosynthesis; chorismate biosynthesis; chorismate from D-erythrose 4-phosphate and phosphoenolpyruvate: step 3/7. In terms of biological role, catalyzes a trans-dehydration via an enolate intermediate. This is 3-dehydroquinate dehydratase from Clostridium beijerinckii (strain ATCC 51743 / NCIMB 8052) (Clostridium acetobutylicum).